The sequence spans 1177 residues: Phospholipid-transporting ATPase IF (1177 aa).

At methionine 1–valine 55 the chain is on the cytoplasmic side. A helical transmembrane segment spans residues proline 56–valine 77. Residues glutamine 78–aspartate 82 lie on the Extracellular side of the membrane. A helical transmembrane segment spans residues threonine 83–lysine 104. Over glutamine 105 to phenylalanine 289 the chain is Cytoplasmic. Residues leucine 290–tryptophan 311 form a helical membrane-spanning segment. The Extracellular portion of the chain corresponds to glutamine 312–aspartate 341. Residues phenylalanine 342–valine 359 traverse the membrane as a helical segment. Residues threonine 360–alanine 876 lie on the Cytoplasmic side of the membrane. Aspartate 407 serves as the catalytic 4-aspartylphosphate intermediate. The ATP site is built by aspartate 407, lysine 408, threonine 409, glutamate 531, phenylalanine 572, lysine 595, arginine 626, threonine 706, glycine 707, aspartate 708, arginine 794, and lysine 800. Residue aspartate 407 coordinates Mg(2+). Residue threonine 409 coordinates Mg(2+). Residue aspartate 821 coordinates Mg(2+). 2 residues coordinate ATP: asparagine 824 and aspartate 825. Aspartate 825 is a binding site for Mg(2+). Residues threonine 877–phenylalanine 898 traverse the membrane as a helical segment. The Extracellular segment spans residues tyrosine 899 to serine 910. A helical membrane pass occupies residues valine 911 to leucine 930. The Cytoplasmic segment spans residues leucine 931 to threonine 960. Residues phenylalanine 961–leucine 982 form a helical membrane-spanning segment. At isoleucine 983–glycine 997 the chain is on the extracellular side. A helical membrane pass occupies residues asparagine 998–glutamate 1020. Residues threonine 1021–threonine 1025 lie on the Cytoplasmic side of the membrane. Residues tryptophan 1026–glycine 1047 form a helical membrane-spanning segment. The Extracellular segment spans residues glycine 1048–glutamine 1065. A helical transmembrane segment spans residues leucine 1066–lysine 1090. At lysine 1091–cysteine 1177 the chain is on the cytoplasmic side. Residue serine 1154 is modified to Phosphoserine.

This sequence belongs to the cation transport ATPase (P-type) (TC 3.A.3) family. Type IV subfamily. As to quaternary structure, component of a P4-ATPase flippase complex which consists of a catalytic alpha subunit ATP11B and an accessory beta subunit TMEM30A. Requires Mg(2+) as cofactor.

The protein resides in the recycling endosome membrane. It is found in the early endosome. The protein localises to the endoplasmic reticulum. It localises to the golgi apparatus. Its subcellular location is the trans-Golgi network. It catalyses the reaction ATP + H2O + phospholipidSide 1 = ADP + phosphate + phospholipidSide 2.. It carries out the reaction a 1,2-diacyl-sn-glycero-3-phospho-L-serine(out) + ATP + H2O = a 1,2-diacyl-sn-glycero-3-phospho-L-serine(in) + ADP + phosphate + H(+). The enzyme catalyses a 1,2-diacyl-sn-glycero-3-phosphoethanolamine(out) + ATP + H2O = a 1,2-diacyl-sn-glycero-3-phosphoethanolamine(in) + ADP + phosphate + H(+). The ATPase activity is up-regulated by aminophospholipids PS and PE. In terms of biological role, catalytic component of a P4-ATPase flippase complex which catalyzes the hydrolysis of ATP coupled to the transport of aminophospholipids, phosphatidylserines (PS) and phosphatidylethanolamines (PE), from the outer to the inner leaflet of intracellular membranes. May contribute to the maintenance of membrane lipid asymmetry in endosome compartment. This Homo sapiens (Human) protein is Phospholipid-transporting ATPase IF (ATP11B).